The following is a 90-amino-acid chain: Small ribosomal subunit protein uS15c (90 aa).

This sequence belongs to the universal ribosomal protein uS15 family. Part of the 30S ribosomal subunit.

Its subcellular location is the plastid. The protein localises to the chloroplast. The polypeptide is Small ribosomal subunit protein uS15c (rps15) (Daucus carota (Wild carrot)).